A 680-amino-acid chain; its full sequence is DNA-directed RNA polymerase subunit beta' (680 aa).

4 residues coordinate Zn(2+): Cys-69, Cys-71, Cys-87, and Cys-90. Residues Asp-489, Asp-491, and Asp-493 each coordinate Mg(2+).

The protein belongs to the RNA polymerase beta' chain family. RpoC1 subfamily. In plastids the minimal PEP RNA polymerase catalytic core is composed of four subunits: alpha, beta, beta', and beta''. When a (nuclear-encoded) sigma factor is associated with the core the holoenzyme is formed, which can initiate transcription. Mg(2+) is required as a cofactor. The cofactor is Zn(2+).

The protein localises to the plastid. It localises to the chloroplast. The enzyme catalyses RNA(n) + a ribonucleoside 5'-triphosphate = RNA(n+1) + diphosphate. Its function is as follows. DNA-dependent RNA polymerase catalyzes the transcription of DNA into RNA using the four ribonucleoside triphosphates as substrates. This Draba nemorosa (Woodland whitlowgrass) protein is DNA-directed RNA polymerase subunit beta'.